Here is a 200-residue protein sequence, read N- to C-terminus: MLAFCRSSLKSKKYIIILLALAAIAGLGTHAAWSSNGLPRIDNKTLARLAQQHPVVVLFRHAERCDRSTNQCLSDKTGITVKGTQDARELGNAFSADIPDFDLYSSNTVRTIQSATWFSAGKKLTVDKRLLQCGNEIYSAIKDLQSKAPDKNIVIFTHNHCLTYIAKDKRDATFKPDYLDGLVMHVEKGKVYLDGEFVNH.

A signal peptide spans 1 to 25; it reads MLAFCRSSLKSKKYIIILLALAAIA.

Belongs to the phosphoglycerate mutase family. Ais subfamily.

The protein resides in the periplasm. The protein operates within bacterial outer membrane biogenesis; lipopolysaccharide metabolism. Its function is as follows. Catalyzes the dephosphorylation of heptose(II) of the outer membrane lipopolysaccharide core. This chain is Lipopolysaccharide core heptose(II)-phosphate phosphatase, found in Escherichia coli (strain ATCC 8739 / DSM 1576 / NBRC 3972 / NCIMB 8545 / WDCM 00012 / Crooks).